The primary structure comprises 461 residues: Transforming growth factor beta-1-induced transcript 1 protein (461 aa).

Residue methionine 1 is modified to N-acetylmethionine. A disordered region spans residues 1 to 86 (MEDLDALLSD…PPFSSSSGVL (86 aa)). The transcription activation stretch occupies residues 1-200 (MEDLDALLSD…GCPSPPGQTN (200 aa)). An interaction with PTK2B/PYK2 region spans residues 1-240 (MEDLDALLSD…CNKPIAGQVV (240 aa)). The short motif at 3 to 15 (DLDALLSDLETTT) is the LD motif 1 element. Phosphothreonine is present on threonine 33. Tyrosine 38 bears the Phosphotyrosine mark. A compositionally biased stretch (polar residues) spans 41–52 (QPQTGSGESSGA). The residue at position 60 (tyrosine 60) is a Phosphotyrosine; by FAK2 and FYN. Serine 68 carries the post-translational modification Phosphoserine. Positions 69-83 (PKSVAPVAPPFSSSS) are enriched in low complexity. Residues 83–136 (SGVLGNGLCELDRLLQELNATQFNITDEIMSQFPSSKMAEGEGKEDQSEDKSIT) are interaction with PTK2/FAK1. The short motif at 92-104 (ELDRLLQELNATQ) is the LD motif 2 element. Residues 116 to 154 (PSSKMAEGEGKEDQSEDKSITTVPSSTFPAPSKPSATSA) form a disordered region. The segment covering 121 to 134 (AEGEGKEDQSEDKS) has biased composition (basic and acidic residues). Over residues 135 to 154 (ITTVPSSTFPAPSKPSATSA) the composition is skewed to polar residues. Serine 140, serine 141, serine 164, and serine 186 each carry phosphoserine. An LD motif 3 motif is present at residues 157-168 (ELDRLMASLSDF). Residues 171 to 204 (QNHLPASGPPQPPAVSPTREGCPSPPGQTNKGSL) are disordered. Threonine 188 carries the phosphothreonine modification. Serine 194 is modified (phosphoserine). The LD motif 4 motif lies at 203–215 (SLDTMLGLLQSDL). LIM zinc-binding domains are found at residues 226-285 (GLCG…RFSP), 286-343 (RCGF…QLFA), 344-403 (PRCQ…QRGS), and 404-461 (LCAT…KLFG). Serine 403 is subject to Phosphoserine. A Phosphothreonine modification is found at threonine 407.

The protein belongs to the paxillin family. As to quaternary structure, homooligomer. Interacts with PPARG. Interacts with TRAF4. Interacts with CRIP2. Interacts with HSPB1. Interacts with ILK. Interacts with LIMS1 and LIMS2. Interacts with NCK2. Interacts with NUDT16L1. Interacts with PAK. Interacts with PTPN12. Interacts with TCF3. Interacts with TCF7L2. Interacts with VCL. Interacts (via LD motif 3) with GIT1. Also interacts with GIT2. Forms a complex with ARHGEF7. Interacts with AR/androgen receptor in a ligand-dependent manner. Interacts with CSK. Interacts with PTK2/FAK1 and PTK2B/PYK2. Interacts with SLC6A3 and SLC6A4. Interacts with NR3C1. Interacts with SMAD3. Interacts with MAPK15. Interacts with SRC. Interacts with LYN. Interacts with talin. Interacts (via LIM zinc-binding domain 2) with CBLC (via RING-type zinc finger); the interaction is direct and enhances CBLC E3 ubiquitin-protein ligase activity. Interacts with PARVA. Interacts with PXN. In terms of processing, phosphorylated by gonadotropin-releasing hormone-activated SRC. In terms of tissue distribution, strongly expressed in large intestine, lung, spleen, testis, uterus and to a lower extent in brain, kidney and liver (at protein level). In brain, expressed by neuronal and non neuronal cells (at protein level).

The protein localises to the cell junction. It is found in the focal adhesion. Its subcellular location is the nucleus matrix. The protein resides in the cytoplasm. It localises to the cytoskeleton. Its function is as follows. Functions as a molecular adapter coordinating multiple protein-protein interactions at the focal adhesion complex and in the nucleus. Links various intracellular signaling modules to plasma membrane receptors and regulates the Wnt and TGFB signaling pathways. May also regulate SLC6A3 and SLC6A4 targeting to the plasma membrane hence regulating their activity. In the nucleus, functions as a nuclear receptor coactivator regulating glucocorticoid, androgen, mineralocorticoid and progesterone receptor transcriptional activity. May play a role in the processes of cell growth, proliferation, migration, differentiation and senescence. May have a zinc-dependent DNA-binding activity. In Rattus norvegicus (Rat), this protein is Transforming growth factor beta-1-induced transcript 1 protein (Tgfb1i1).